A 1828-amino-acid polypeptide reads, in one-letter code: InaD-like protein (1828 aa).

Residues 5-65 form the L27 domain; the sequence is PAPDKLQVLQ…SIKQLKGQLS (61 aa). PDZ domains lie at 134–221, 248–328, and 365–453; these read YIDI…AREP, DVEL…ARDP, and GVEL…VRRK. Phosphoserine occurs at positions 459 and 522. Positions 553–639 constitute a PDZ 4 domain; that stretch reads DAELQKYSKL…PFTLVCCRRL (87 aa). Position 645 is a phosphoserine (serine 645). PDZ domains follow at residues 686 to 758 and 1070 to 1162; these read IVEL…EVLK and IVEI…QSLS. Residues 1168-1220 are disordered; the sequence is IPSVHNKANKIANNQDQNTEEKKEKRQGTPPPPMKLPPPYKAPSDDSDENEEE. Residues 1196–1208 show a composition bias toward pro residues; it reads TPPPPMKLPPPYK. At serine 1211 the chain carries Phosphoserine. Positions 1241–1324 constitute a PDZ 7 domain; sequence IIELEKDKNG…KVKLVFIRNE (84 aa). A disordered region spans residues 1333 to 1362; it reads APFPVPSSSPSSLEDQSGTEPVSSEEDGSL. Polar residues predominate over residues 1345–1354; sequence LEDQSGTEPV. PDZ domains lie at 1464–1547 and 1560–1642; these read IIEI…YRDE and PVDL…GRLR. Threonine 1535 is modified (phosphothreonine). Polar residues predominate over residues 1645–1668; sequence SWTSSRKTSQNSQGSQHSTHSSFH. The disordered stretch occupies residues 1645 to 1669; sequence SWTSSRKTSQNSQGSQHSTHSSFHP. The region spanning 1703–1789 is the PDZ 10 domain; it reads TVEIIRELSD…RIILQVVADT (87 aa). The disordered stretch occupies residues 1805–1828; sequence YHLGSPTAEHHPEDTEEPLQMTAG.

In terms of assembly, forms a ternary complex with PALS1 and CRB1. Component of a complex whose core is composed of ARHGAP17, AMOT, PALS1, INADL/PATJ and PARD3/PAR3. Forms a heterotrimeric complex composed of MMP5, LIN7B and PATJ; the N-terminal L27 domain of PALS1 interacts with the L27 domain of PATJ and the C-terminal L27 domain of PALS1 interacts with the L27 domain of LIN7B. Component of a complex composed of CRB3, PALS1 and PATJ. As part of the Crumbs complex; interacts with WWP1, the interaction is enhanced by AMOTL2 and facilitates WWP1 localization to the plasma membrane. The Crumbs complex promotes monoubiquitination of AMOTL2 by WWP1, which activates the Hippo signaling pathway. Interacts (via N-terminus) with PALS1/PALS (via PDZ domain). Interacts with TJP3/ZO-3 and CLDN1/claudin-1. Interacts with ASIC3, KCNJ10, KCNJ15, GRIN2A, GRIN2B, GRIN2C, GRIN2D, NLGN2, and HTR2A. Interacts with MPP7. Directly interacts with HTR4. Interacts (via PDZ domain 8) with WWC1 (via the ADDV motif). Interacts with SLC6A4. Interacts (via C-terminus) with ARHGEF18. Interacts with NPHP1. Interacts with PARD3/PAR3. Interacts (via PDZ1-6 domains) with TJP1/ZO1; the interaction is required for attachment and extension of TJP1/ZO1 condensates along the apical cell interface.

The protein localises to the cell junction. It is found in the tight junction. Its subcellular location is the apical cell membrane. It localises to the cytoplasm. The protein resides in the perinuclear region. Scaffolding protein that facilitates the localization of proteins to the cell membrane. Required for the correct formation of tight junctions and epithelial apico-basal polarity. Acts (via its L27 domain) as an apical connector and elongation factor for multistranded TJP1/ZO1 condensates that form a tight junction belt, thereby required for the formation of the tight junction-mediated cell barrier. Positively regulates epithelial cell microtubule elongation and cell migration, possibly via facilitating localization of PRKCI/aPKC and PAR3D/PAR3 at the leading edge of migrating cells. Plays a role in the correct reorientation of the microtubule-organizing center during epithelial migration. May regulate the surface expression and/or function of ASIC3 in sensory neurons. May recruit ARHGEF18 to apical cell-cell boundaries. In Canis lupus familiaris (Dog), this protein is InaD-like protein.